The following is a 306-amino-acid chain: Acetyl-coenzyme A carboxylase carboxyl transferase subunit beta (306 aa).

The CoA carboxyltransferase N-terminal domain maps to 25-294; it reads VWTKCDSCGQ…PQDPLPHEPR (270 aa). Zn(2+)-binding residues include C29, C32, C48, and C51. A C4-type zinc finger spans residues 29-51; sequence CDSCGQVLYRAELERNLEVCPKC. Residues 281–306 form a disordered region; that stretch reads NRPQPQDPLPHEPRPDAVPEDHQDEV. Over residues 289 to 306 the composition is skewed to basic and acidic residues; the sequence is LPHEPRPDAVPEDHQDEV.

The protein belongs to the AccD/PCCB family. In terms of assembly, acetyl-CoA carboxylase is a heterohexamer composed of biotin carboxyl carrier protein (AccB), biotin carboxylase (AccC) and two subunits each of ACCase subunit alpha (AccA) and ACCase subunit beta (AccD). The cofactor is Zn(2+).

The protein resides in the cytoplasm. The catalysed reaction is N(6)-carboxybiotinyl-L-lysyl-[protein] + acetyl-CoA = N(6)-biotinyl-L-lysyl-[protein] + malonyl-CoA. Its pathway is lipid metabolism; malonyl-CoA biosynthesis; malonyl-CoA from acetyl-CoA: step 1/1. Its function is as follows. Component of the acetyl coenzyme A carboxylase (ACC) complex. Biotin carboxylase (BC) catalyzes the carboxylation of biotin on its carrier protein (BCCP) and then the CO(2) group is transferred by the transcarboxylase to acetyl-CoA to form malonyl-CoA. This is Acetyl-coenzyme A carboxylase carboxyl transferase subunit beta from Sodalis glossinidius (strain morsitans).